A 117-amino-acid chain; its full sequence is ATP-dependent Clp protease adapter protein ClpS 1 (117 aa).

Belongs to the ClpS family. In terms of assembly, binds to the N-terminal domain of the chaperone ClpA.

In terms of biological role, involved in the modulation of the specificity of the ClpAP-mediated ATP-dependent protein degradation. This chain is ATP-dependent Clp protease adapter protein ClpS 1, found in Agrobacterium fabrum (strain C58 / ATCC 33970) (Agrobacterium tumefaciens (strain C58)).